A 303-amino-acid chain; its full sequence is Coenzyme PQQ synthesis protein B (303 aa).

Belongs to the PqqB family.

It participates in cofactor biosynthesis; pyrroloquinoline quinone biosynthesis. Its function is as follows. May be involved in the transport of PQQ or its precursor to the periplasm. The polypeptide is Coenzyme PQQ synthesis protein B (Pseudomonas putida (strain W619)).